Reading from the N-terminus, the 340-residue chain is UDP-N-acetylglucosamine--N-acetylmuramyl-(pentapeptide) pyrophosphoryl-undecaprenol N-acetylglucosamine transferase (340 aa).

Residues threonine 10 to glycine 12, asparagine 124, serine 179, and glutamine 277 each bind UDP-N-acetyl-alpha-D-glucosamine.

This sequence belongs to the glycosyltransferase 28 family. MurG subfamily.

The protein localises to the cell inner membrane. It catalyses the reaction di-trans,octa-cis-undecaprenyl diphospho-N-acetyl-alpha-D-muramoyl-L-alanyl-D-glutamyl-meso-2,6-diaminopimeloyl-D-alanyl-D-alanine + UDP-N-acetyl-alpha-D-glucosamine = di-trans,octa-cis-undecaprenyl diphospho-[N-acetyl-alpha-D-glucosaminyl-(1-&gt;4)]-N-acetyl-alpha-D-muramoyl-L-alanyl-D-glutamyl-meso-2,6-diaminopimeloyl-D-alanyl-D-alanine + UDP + H(+). Its pathway is cell wall biogenesis; peptidoglycan biosynthesis. In terms of biological role, cell wall formation. Catalyzes the transfer of a GlcNAc subunit on undecaprenyl-pyrophosphoryl-MurNAc-pentapeptide (lipid intermediate I) to form undecaprenyl-pyrophosphoryl-MurNAc-(pentapeptide)GlcNAc (lipid intermediate II). This is UDP-N-acetylglucosamine--N-acetylmuramyl-(pentapeptide) pyrophosphoryl-undecaprenol N-acetylglucosamine transferase from Sulfurimonas denitrificans (strain ATCC 33889 / DSM 1251) (Thiomicrospira denitrificans (strain ATCC 33889 / DSM 1251)).